The sequence spans 148 residues: SsrA-binding protein (148 aa).

The segment at 119-148 (AKGKKQHDKRETEKKRDWEREKARLMRSPG) is disordered. Over residues 126 to 142 (DKRETEKKRDWEREKAR) the composition is skewed to basic and acidic residues.

Belongs to the SmpB family.

The protein resides in the cytoplasm. In terms of biological role, required for rescue of stalled ribosomes mediated by trans-translation. Binds to transfer-messenger RNA (tmRNA), required for stable association of tmRNA with ribosomes. tmRNA and SmpB together mimic tRNA shape, replacing the anticodon stem-loop with SmpB. tmRNA is encoded by the ssrA gene; the 2 termini fold to resemble tRNA(Ala) and it encodes a 'tag peptide', a short internal open reading frame. During trans-translation Ala-aminoacylated tmRNA acts like a tRNA, entering the A-site of stalled ribosomes, displacing the stalled mRNA. The ribosome then switches to translate the ORF on the tmRNA; the nascent peptide is terminated with the 'tag peptide' encoded by the tmRNA and targeted for degradation. The ribosome is freed to recommence translation, which seems to be the essential function of trans-translation. This chain is SsrA-binding protein, found in Paraburkholderia xenovorans (strain LB400).